The following is a 932-amino-acid chain: PMS1 protein homolog 1 (932 aa).

The tract at residues 465 to 493 (TQSENGNKDHIDESGENEEEAGLENSSEI) is disordered. Positions 571-639 (IKKPMSASAL…RYNSQMKRAI (69 aa)) form a DNA-binding region, HMG box.

The protein belongs to the DNA mismatch repair MutL/HexB family. Component of the DNA mismatch repair (MMR) complex composed at least of MSH2, MSH3, MSH6, PMS1 and MLH1. The MutL-beta complex is a heterodimer of PMS1 and MLH1. Interacts with MCM9.

The protein localises to the nucleus. In terms of biological role, probably involved in the repair of mismatches in DNA. The protein is PMS1 protein homolog 1 (PMS1) of Homo sapiens (Human).